We begin with the raw amino-acid sequence, 276 residues long: Pantothenate synthetase (276 aa).

Position 27–34 (Met-27–His-34) interacts with ATP. His-34 functions as the Proton donor in the catalytic mechanism. Residue Gln-58 participates in (R)-pantoate binding. Position 58 (Gln-58) interacts with beta-alanine. Gly-147–Asp-150 provides a ligand contact to ATP. Gln-153 is a (R)-pantoate binding site. Residues Val-176 and Leu-184–Arg-187 each bind ATP.

This sequence belongs to the pantothenate synthetase family. Homodimer.

It localises to the cytoplasm. The enzyme catalyses (R)-pantoate + beta-alanine + ATP = (R)-pantothenate + AMP + diphosphate + H(+). It functions in the pathway cofactor biosynthesis; (R)-pantothenate biosynthesis; (R)-pantothenate from (R)-pantoate and beta-alanine: step 1/1. Functionally, catalyzes the condensation of pantoate with beta-alanine in an ATP-dependent reaction via a pantoyl-adenylate intermediate. In Helicobacter pylori (strain Shi470), this protein is Pantothenate synthetase.